The sequence spans 299 residues: GTPase Era (299 aa).

An Era-type G domain is found at 5–172; it reads KSGFVSIIGR…IDVLKSFLPE (168 aa). The G1 stretch occupies residues 13–20; it reads GRPNVGKS. Residue 13–20 coordinates GTP; that stretch reads GRPNVGKS. Residues 39 to 43 are G2; that stretch reads QTTRN. A G3 region spans residues 60-63; it reads DTPG. GTP is bound by residues 60 to 64 and 122 to 125; these read DTPGI and NKID. The tract at residues 122 to 125 is G4; the sequence is NKID. The G5 stretch occupies residues 151–153; the sequence is ISA. In terms of domain architecture, KH type-2 spans 203–280; it reads TSEEIPHAIG…YLELWVKVQR (78 aa).

It belongs to the TRAFAC class TrmE-Era-EngA-EngB-Septin-like GTPase superfamily. Era GTPase family. As to quaternary structure, monomer.

The protein localises to the cytoplasm. The protein resides in the cell membrane. Functionally, an essential GTPase that binds both GDP and GTP, with rapid nucleotide exchange. Plays a role in 16S rRNA processing and 30S ribosomal subunit biogenesis and possibly also in cell cycle regulation and energy metabolism. In Staphylococcus epidermidis (strain ATCC 35984 / DSM 28319 / BCRC 17069 / CCUG 31568 / BM 3577 / RP62A), this protein is GTPase Era.